A 188-amino-acid polypeptide reads, in one-letter code: Pyridoxal 5'-phosphate synthase subunit PdxT (188 aa).

46–48 (GES) lines the L-glutamine pocket. Residue Cys78 is the Nucleophile of the active site. L-glutamine contacts are provided by residues Arg105 and 134 to 135 (IR). Catalysis depends on charge relay system residues His170 and Glu172.

This sequence belongs to the glutaminase PdxT/SNO family. In the presence of PdxS, forms a dodecamer of heterodimers. Only shows activity in the heterodimer.

It carries out the reaction aldehydo-D-ribose 5-phosphate + D-glyceraldehyde 3-phosphate + L-glutamine = pyridoxal 5'-phosphate + L-glutamate + phosphate + 3 H2O + H(+). The enzyme catalyses L-glutamine + H2O = L-glutamate + NH4(+). It functions in the pathway cofactor biosynthesis; pyridoxal 5'-phosphate biosynthesis. Catalyzes the hydrolysis of glutamine to glutamate and ammonia as part of the biosynthesis of pyridoxal 5'-phosphate. The resulting ammonia molecule is channeled to the active site of PdxS. The polypeptide is Pyridoxal 5'-phosphate synthase subunit PdxT (Desulforamulus reducens (strain ATCC BAA-1160 / DSM 100696 / MI-1) (Desulfotomaculum reducens)).